Reading from the N-terminus, the 419-residue chain is L-rhamnose isomerase (419 aa).

Positions 262, 294, and 296 each coordinate Mn(2+).

This sequence belongs to the rhamnose isomerase family. Homotetramer. Requires Mn(2+) as cofactor.

It localises to the cytoplasm. The catalysed reaction is L-rhamnopyranose = L-rhamnulose. The protein operates within carbohydrate degradation; L-rhamnose degradation; glycerone phosphate from L-rhamnose: step 1/3. Its function is as follows. Catalyzes the interconversion of L-rhamnose and L-rhamnulose. This chain is L-rhamnose isomerase, found in Escherichia coli O81 (strain ED1a).